The primary structure comprises 375 residues: Histidine biosynthesis bifunctional protein HisB (375 aa).

Positions 1–168 are histidinol-phosphatase; the sequence is MTPILFVDRD…GIAHELADAP (168 aa). Aspartate 8 (nucleophile) is an active-site residue. 3 residues coordinate Mg(2+): aspartate 8, aspartate 10, and aspartate 128. The Proton donor role is filled by aspartate 10. Positions 169-375 are imidazoleglycerol-phosphate dehydratase; that stretch reads RRAVVQRNTK…TALPTTKGAL (207 aa).

The protein in the N-terminal section; belongs to the histidinol-phosphatase family. This sequence in the C-terminal section; belongs to the imidazoleglycerol-phosphate dehydratase family. It depends on Mg(2+) as a cofactor.

Its subcellular location is the cytoplasm. It catalyses the reaction D-erythro-1-(imidazol-4-yl)glycerol 3-phosphate = 3-(imidazol-4-yl)-2-oxopropyl phosphate + H2O. It carries out the reaction L-histidinol phosphate + H2O = L-histidinol + phosphate. Its pathway is amino-acid biosynthesis; L-histidine biosynthesis; L-histidine from 5-phospho-alpha-D-ribose 1-diphosphate: step 6/9. The protein operates within amino-acid biosynthesis; L-histidine biosynthesis; L-histidine from 5-phospho-alpha-D-ribose 1-diphosphate: step 8/9. The protein is Histidine biosynthesis bifunctional protein HisB of Xanthomonas euvesicatoria pv. vesicatoria (strain 85-10) (Xanthomonas campestris pv. vesicatoria).